The following is a 120-amino-acid chain: Aspartate 1-decarboxylase (120 aa).

Residue Ser24 is the Schiff-base intermediate with substrate; via pyruvic acid of the active site. Position 24 is a pyruvic acid (Ser) (Ser24). Thr56 is a substrate binding site. The Proton donor role is filled by Tyr57. 70–72 is a binding site for substrate; that stretch reads GAA.

The protein belongs to the PanD family. As to quaternary structure, heterooctamer of four alpha and four beta subunits. Pyruvate is required as a cofactor. Post-translationally, is synthesized initially as an inactive proenzyme, which is activated by self-cleavage at a specific serine bond to produce a beta-subunit with a hydroxyl group at its C-terminus and an alpha-subunit with a pyruvoyl group at its N-terminus.

The protein localises to the cytoplasm. It catalyses the reaction L-aspartate + H(+) = beta-alanine + CO2. It participates in cofactor biosynthesis; (R)-pantothenate biosynthesis; beta-alanine from L-aspartate: step 1/1. Functionally, catalyzes the pyruvoyl-dependent decarboxylation of aspartate to produce beta-alanine. The chain is Aspartate 1-decarboxylase from Pyrobaculum islandicum (strain DSM 4184 / JCM 9189 / GEO3).